Here is a 210-residue protein sequence, read N- to C-terminus: Small ribosomal subunit protein uS7 (210 aa).

The segment covering 1 to 22 has biased composition (acidic residues); that stretch reads MSDEQPAEDETEEAAAESEDTQ. The disordered stretch occupies residues 1–23; it reads MSDEQPAEDETEEAAAESEDTQE.

The protein belongs to the universal ribosomal protein uS7 family. As to quaternary structure, part of the 30S ribosomal subunit. Contacts proteins S9 and S11.

One of the primary rRNA binding proteins, it binds directly to 16S rRNA where it nucleates assembly of the head domain of the 30S subunit. Is located at the subunit interface close to the decoding center. The sequence is that of Small ribosomal subunit protein uS7 from Halobacterium salinarum (strain ATCC 29341 / DSM 671 / R1).